The sequence spans 355 residues: MAATGQNLAVVVHRAGDLRLENRPIPEPGPNEVLLRMHSVGICGSDVHYWQHGRIGDFVVKDPMVLGHEASGTVIKVGAGVTHLKPGDRVAIEPGVPRETDEFCKTGRYNLSPTIFFCATPPDDGNLCRYYKHSASYCYKLPDSVTFEEGALIEPLSVGIHACKRAGVTLGSRVFVSGSGPIGLVNVIIAKMMGAAAVVVTDLSASRLQTAKELGADFTIQIKNETPQEVAAKVESLLGCMPEITVECTGVQACIQASIYATRSGGTLVLVGLGPEMVTVPIVNAAVREVDIRGIFRYCNTWPVAISLLASKRINIKPLVTHRFPLEKALEAFETTKRGEGVKIMLKCDPTDQNP.

At alanine 2 the chain carries N-acetylalanine. Cysteine 43 provides a ligand contact to Zn(2+). Tyrosine 49 provides a ligand contact to substrate. Residues histidine 68 and glutamate 69 each contribute to the Zn(2+) site. A substrate-binding site is contributed by glutamate 154. NAD(+) is bound by residues isoleucine 182, aspartate 202, arginine 207, 271-273 (VGL), and 295-297 (IFR). Residues arginine 297 and tyrosine 298 each coordinate substrate.

Belongs to the zinc-containing alcohol dehydrogenase family. In terms of assembly, homotetramer. Zn(2+) is required as a cofactor. As to expression, expressed in liver.

Its subcellular location is the mitochondrion membrane. The protein localises to the cell projection. It localises to the cilium. The protein resides in the flagellum. The catalysed reaction is keto-D-fructose + NADH + H(+) = D-sorbitol + NAD(+). Its function is as follows. Polyol dehydrogenase that catalyzes the reversible NAD(+)-dependent oxidation of various sugar alcohols. Is active with D-sorbitol (D-glucitol) as substrate, leading to the C2-oxidized product D-fructose. Is a key enzyme in the polyol pathway that interconverts glucose and fructose via sorbitol, which constitutes an important alternate route for glucose metabolism. In Gallus gallus (Chicken), this protein is Sorbitol dehydrogenase (SORD).